The following is a 261-amino-acid chain: Acyl-[acyl-carrier-protein]--UDP-N-acetylglucosamine O-acyltransferase (261 aa).

Belongs to the transferase hexapeptide repeat family. LpxA subfamily. In terms of assembly, homotrimer.

It is found in the cytoplasm. It carries out the reaction a (3R)-hydroxyacyl-[ACP] + UDP-N-acetyl-alpha-D-glucosamine = a UDP-3-O-[(3R)-3-hydroxyacyl]-N-acetyl-alpha-D-glucosamine + holo-[ACP]. It participates in glycolipid biosynthesis; lipid IV(A) biosynthesis; lipid IV(A) from (3R)-3-hydroxytetradecanoyl-[acyl-carrier-protein] and UDP-N-acetyl-alpha-D-glucosamine: step 1/6. Its function is as follows. Involved in the biosynthesis of lipid A, a phosphorylated glycolipid that anchors the lipopolysaccharide to the outer membrane of the cell. This is Acyl-[acyl-carrier-protein]--UDP-N-acetylglucosamine O-acyltransferase from Sulfurimonas denitrificans (strain ATCC 33889 / DSM 1251) (Thiomicrospira denitrificans (strain ATCC 33889 / DSM 1251)).